Consider the following 130-residue polypeptide: D-ribose pyranase (130 aa).

Residue H20 is the Proton donor of the active site. Substrate is bound by residues D28, H97, and 119–121; that span reads YAN.

It belongs to the RbsD / FucU family. RbsD subfamily. Homodecamer.

The protein resides in the cytoplasm. The enzyme catalyses beta-D-ribopyranose = beta-D-ribofuranose. Its pathway is carbohydrate metabolism; D-ribose degradation; D-ribose 5-phosphate from beta-D-ribopyranose: step 1/2. Functionally, catalyzes the interconversion of beta-pyran and beta-furan forms of D-ribose. The sequence is that of D-ribose pyranase from Bacillus pumilus (strain SAFR-032).